The sequence spans 387 residues: uncharacterized protein (387 aa).

The disordered stretch occupies residues 1-23; the sequence is MSSLPRNAVARNSKMHKKRDSGV. A coiled-coil region spans residues 98-129; that stretch reads KIARDLKKRQEDYEKTKLEVERLKRSEELANK. The disordered stretch occupies residues 146 to 255; that stretch reads ENNTVEPNNE…NKKKKKEKNK (110 aa). Low complexity-rich tracts occupy residues 162-175 and 182-194; these read EQIT…TTEQ and EQTT…QTAE. The span at 204–213 shows a compositional bias: basic and acidic residues; sequence TVEKSGDQST. The span at 214 to 231 shows a compositional bias: polar residues; the sequence is EKTTQQTAEESVEQSTEQ.

This is an uncharacterized protein from Acanthamoeba polyphaga mimivirus (APMV).